Consider the following 2226-residue polypeptide: Rotatin (2226 aa).

Positions 295–346 (EARGPYHSPNPSPGSSSSRPSVVGRTGQRPRGDGQDWDAVSSSGSSSHTHVN) are disordered. Positions 307-319 (PGSSSSRPSVVGR) are enriched in low complexity. At S311 the chain carries Phosphoserine. K813 carries the N6-acetyllysine modification.

It belongs to the rotatin family. Interacts with PPP1R35; this interaction allows the mutual recruitment to the centriole.

Its subcellular location is the cytoplasm. The protein resides in the cytoskeleton. It localises to the cilium basal body. Involved in the genetic cascade that governs left-right specification. Required for correct asymmetric expression of NODAL, LEFTY and PITX2. The chain is Rotatin from Mus musculus (Mouse).